Reading from the N-terminus, the 1032-residue chain is Importin beta-like protein KAP120 (1032 aa).

An N-acetylalanine modification is found at A2. One can recognise an Importin N-terminal domain in the interval 31–103 (AEQQLRQWET…RGRLFEMIDE (73 aa)).

The protein belongs to the importin beta family. Interacts with GTP-bound GSP1 and RFP1. Associates with the nuclear pore complex.

It localises to the cytoplasm. The protein localises to the nucleus. In terms of biological role, functions in nuclear protein import as nuclear transport receptor. Serves as receptor for nuclear localization signals (NLS) in cargo substrates. Thought to mediate docking of the importin/substrate complex to the nuclear pore complex (NPC) through binding to nucleoporin and the complex is subsequently translocated through the pore by an energy requiring, RAN-dependent mechanism. Required for nuclear import of Ho endonuclease and RFP1, and involved in rRNA-processing and assembly or export of 60S ribosomal subunits. The sequence is that of Importin beta-like protein KAP120 (KAP120) from Saccharomyces cerevisiae (strain ATCC 204508 / S288c) (Baker's yeast).